Consider the following 231-residue polypeptide: Ribonuclease 3 (231 aa).

One can recognise an RNase III domain in the interval 5-134 (QKGIKEDFGI…FIGALYKDQG (130 aa)). Residue glutamate 47 coordinates Mg(2+). The active site involves aspartate 51. Positions 120 and 123 each coordinate Mg(2+). Glutamate 123 is an active-site residue. The DRBM domain occupies 160–230 (DYKSKLQELL…AKKAYQDVTP (71 aa)).

The protein belongs to the ribonuclease III family. Homodimer. It depends on Mg(2+) as a cofactor.

The protein resides in the cytoplasm. The catalysed reaction is Endonucleolytic cleavage to 5'-phosphomonoester.. Functionally, digests double-stranded RNA. Involved in the processing of primary rRNA transcript to yield the immediate precursors to the large and small rRNAs (23S and 16S). Processes some mRNAs, and tRNAs when they are encoded in the rRNA operon. Processes pre-crRNA and tracrRNA of type II CRISPR loci if present in the organism. This chain is Ribonuclease 3, found in Oenococcus oeni (strain ATCC BAA-331 / PSU-1).